Consider the following 460-residue polypeptide: Transcription factor AP-2-beta (460 aa).

A Glycyl lysine isopeptide (Lys-Gly) (interchain with G-Cter in SUMO) cross-link involves residue lysine 21. The interval 30-139 is disordered; sequence HDGVPSHSSR…PQLSGLDPRR (110 aa). Residues 35–51 show a composition bias toward polar residues; it reads SHSSRLSQLGSVSQGPY. Residues 121 to 132 are compositionally biased toward low complexity; it reads LLPQPRAALPQL. At serine 258 the chain carries Phosphoserine; by PKA. Residues 435 to 460 form a disordered region; sequence NTTTNRHTSGEGPGSKTGDKEEKHRK. A compositionally biased stretch (basic and acidic residues) spans 451-460; it reads TGDKEEKHRK.

It belongs to the AP-2 family. Binds DNA as a dimer. Can form homodimers or heterodimers with other AP-2 family members. Interacts with CITED4. Interacts with UBE2I. Interacts with KCTD1; this interaction represses transcription activation. Interacts with CITED2 (via C-terminus); the interaction stimulates TFAP2B-transcriptional activity. Sumoylated on Lys-21; which inhibits transcriptional activity.

The protein localises to the nucleus. Sequence-specific DNA-binding protein that interacts with inducible viral and cellular enhancer elements to regulate transcription of selected genes. AP-2 factors bind to the consensus sequence 5'-GCCNNNGGC-3' and activate genes involved in a large spectrum of important biological functions including proper eye, face, body wall, limb and neural tube development. They also suppress a number of genes including MCAM/MUC18, C/EBP alpha and MYC. AP-2-beta appears to be required for normal face and limb development and for proper terminal differentiation and function of renal tubular epithelia. This Canis lupus familiaris (Dog) protein is Transcription factor AP-2-beta (TFAP2B).